Here is a 222-residue protein sequence, read N- to C-terminus: 4'-phosphopantetheinyl transferase Npt (222 aa).

Residues aspartate 105, glutamate 107, and glutamate 147 each coordinate Mg(2+).

The protein belongs to the P-Pant transferase superfamily. In terms of assembly, monomer. Mg(2+) is required as a cofactor.

The catalysed reaction is apo-[ACP] + CoA = holo-[ACP] + adenosine 3',5'-bisphosphate + H(+). Catalyzes the transfer of the 4'-phosphopantetheine moiety from coenzyme A to a serine residue in the acyl-carrier domain of carboxylic acid reductase Car, thus converting apo-Car to fully active holo-Car. Is probably also responsible for the activation of other proteins with phosphopantetheine attachment sites. In Nocardia iowensis, this protein is 4'-phosphopantetheinyl transferase Npt (npt).